Reading from the N-terminus, the 848-residue chain is Adenylate cyclase (848 aa).

Residues 1 to 535 form a catalytic region; it reads MYLYIETLKQ…DVSHHFPLRL (535 aa). Residues 541–848 are regulatory; it reads KALYSPCEIR…DAPLLQQYFS (308 aa). A Phosphohistidine; by CRR modification is found at histidine 609.

Belongs to the adenylyl cyclase class-1 family.

The protein localises to the cytoplasm. It catalyses the reaction ATP = 3',5'-cyclic AMP + diphosphate. In Salmonella typhi, this protein is Adenylate cyclase (cyaA).